Here is a 139-residue protein sequence, read N- to C-terminus: Myosin light chain kinase, smooth muscle (139 aa).

The tract at residues 48-97 is disordered; it reads APTGENAKAPEMKARRPKSSLPPVLGTESDATVKKKPAPKTPPKAAMPPQ.

Belongs to the protein kinase superfamily. CAMK Ser/Thr protein kinase family. In terms of assembly, interacts with SVIL. In terms of processing, the C-terminus is deglutamylated by AGTPBP1/CCP1, AGBL1/CCP4 and AGBL4/CCP6, leading to the formation of Myosin light chain kinase, smooth muscle, deglutamylated form. The consequences of C-terminal deglutamylation are unknown.

The enzyme catalyses L-seryl-[myosin light chain] + ATP = O-phospho-L-seryl-[myosin light chain] + ADP + H(+). It carries out the reaction L-threonyl-[myosin light chain] + ATP = O-phospho-L-threonyl-[myosin light chain] + ADP + H(+). Phosphorylates a specific serine in the N-terminus of a myosin light chain. Also regulates actin-myosin interaction through a non-kinase activity. The chain is Myosin light chain kinase, smooth muscle (MYLK) from Sus scrofa (Pig).